The sequence spans 222 residues: Ribosomal RNA small subunit methyltransferase G (222 aa).

S-adenosyl-L-methionine contacts are provided by G80, L85, and R149.

The protein belongs to the methyltransferase superfamily. RNA methyltransferase RsmG family.

It localises to the cytoplasm. Functionally, specifically methylates the N7 position of a guanine in 16S rRNA. This is Ribosomal RNA small subunit methyltransferase G from Treponema pallidum (strain Nichols).